Reading from the N-terminus, the 147-residue chain is GLSAAQRQVIAATWKDIAGADNGAGVGKDCLIKFLSAHPQMAAVFGFSGASDPGVAALGAKVLAQIGVAVSHLGDEGKMVAQMKAVGVRHKGYGNKHIKAQYFEPLGASLLSAMEHRIGGKMNAAAKDAWAAAYADISGALISGLQS.

A Globin domain is found at 1-146; the sequence is GLSAAQRQVI…ISGALISGLQ (146 aa). H90 lines the heme b pocket.

The protein belongs to the globin family. Monomer.

This chain is Globin, major monomeric component, found in Glycera dibranchiata (Bloodworm).